A 168-amino-acid chain; its full sequence is RxLR effector protein PITG_12737 (168 aa).

Positions 1–20 (MRACAILVVAAAAVLTGSTA) are cleaved as a signal peptide. The short motif at 54–77 (RRLRKHKTVNTNSEMEYESEAEAR) is the RxLR-dEER element.

The protein belongs to the RxLR effector family.

It localises to the secreted. Its subcellular location is the host nucleus. It is found in the host cytoplasm. Effector that enhances P.infestans colonization of Nicotiana benthamiana leaves. This chain is RxLR effector protein PITG_12737, found in Phytophthora infestans (strain T30-4) (Potato late blight agent).